Reading from the N-terminus, the 207-residue chain is MKVQIIFYSMYGHIFRMAEAVAEGARSVAGAEVGLFRVPELVPDEVLEKSGAKTAQQAFAHVPVAKTEQLPEADAIIFGTPTRFGNMCAQMRNFLDQTGGLWMKGSLVGKVGSVFTSTATQHGGQESTILSTHITLLHQGMVLVGLPYTEKRQMGMDEILGGSPYGAATIAGGDGSRMPSQTEIEMAKFQGRHVAEIASALVRGRAA.

Positions 3 to 194 (VQIIFYSMYG…EMAKFQGRHV (192 aa)) constitute a Flavodoxin-like domain. FMN contacts are provided by residues 9 to 14 (SMYGHI) and 82 to 84 (TRF). Tyr11 is a binding site for NAD(+). A substrate-binding site is contributed by Trp102. Residues 117 to 123 (STATQHG) and His138 contribute to the FMN site.

This sequence belongs to the WrbA family. FMN is required as a cofactor.

The catalysed reaction is a quinone + NADH + H(+) = a quinol + NAD(+). It catalyses the reaction a quinone + NADPH + H(+) = a quinol + NADP(+). The sequence is that of NAD(P)H dehydrogenase (quinone) from Aromatoleum aromaticum (strain DSM 19018 / LMG 30748 / EbN1) (Azoarcus sp. (strain EbN1)).